The following is a 257-amino-acid chain: Neurotrophin-3 (257 aa).

Residues 1–18 (MSILFYVIFLAYLRGIQG) form the signal peptide. Positions 19-138 (NNMDQRSLPE…VANRTSRRKR (120 aa)) are excised as a propeptide. Residues 61-81 (STLPKAEAPREPERGGPAKSA) form a disordered region. Residues 67–76 (EAPREPERGG) are compositionally biased toward basic and acidic residues. An N-linked (GlcNAc...) asparagine glycan is attached at asparagine 131. Intrachain disulfides connect cysteine 152–cysteine 217, cysteine 195–cysteine 246, and cysteine 205–cysteine 248.

Belongs to the NGF-beta family. Brain and peripheral tissues.

It is found in the secreted. Seems to promote the survival of visceral and proprioceptive sensory neurons. The sequence is that of Neurotrophin-3 (NTF3) from Homo sapiens (Human).